The primary structure comprises 938 residues: Protein translocase subunit SecA (938 aa).

ATP is bound by residues Gln90, 108–112 (GEGKT), and Asp504.

It belongs to the SecA family. In terms of assembly, monomer and homodimer. Part of the essential Sec protein translocation apparatus which comprises SecA, SecYEG and auxiliary proteins SecDF. Other proteins may also be involved.

It is found in the cell inner membrane. The protein localises to the cellular thylakoid membrane. The protein resides in the cytoplasm. The catalysed reaction is ATP + H2O + cellular proteinSide 1 = ADP + phosphate + cellular proteinSide 2.. Functionally, part of the Sec protein translocase complex. Interacts with the SecYEG preprotein conducting channel. Has a central role in coupling the hydrolysis of ATP to the transfer of proteins into and across the cell membrane, serving as an ATP-driven molecular motor driving the stepwise translocation of polypeptide chains across the membrane. Probably participates in protein translocation into and across both the cytoplasmic and thylakoid membranes in cyanobacterial cells. This is Protein translocase subunit SecA from Microcystis aeruginosa (strain NIES-843 / IAM M-2473).